A 254-amino-acid chain; its full sequence is Pectate lyase E (254 aa).

The N-terminal stretch at 1–17 (MYQPLLLLPLLLTSAFA) is a signal peptide. Positions 227–254 (TNNNSKEPKKKSSGPSSYCKYSEPLSKC) are disordered. Asn229 carries an N-linked (GlcNAc...) asparagine glycan. A compositionally biased stretch (low complexity) spans 239-254 (SGPSSYCKYSEPLSKC).

It belongs to the polysaccharide lyase 3 family. Ca(2+) serves as cofactor.

The protein localises to the secreted. The enzyme catalyses Eliminative cleavage of (1-&gt;4)-alpha-D-galacturonan to give oligosaccharides with 4-deoxy-alpha-D-galact-4-enuronosyl groups at their non-reducing ends.. Its function is as follows. Pectinolytic enzyme consist of four classes of enzymes: pectin lyase, polygalacturonase, pectin methylesterase and rhamnogalacturonase. Among pectinolytic enzymes, pectin lyase is the most important in depolymerization of pectin, since it cleaves internal glycosidic bonds of highly methylated pectins. Favors pectate, the anion, over pectin, the methyl ester. The sequence is that of Pectate lyase E (plyE) from Emericella nidulans (strain FGSC A4 / ATCC 38163 / CBS 112.46 / NRRL 194 / M139) (Aspergillus nidulans).